We begin with the raw amino-acid sequence, 202 residues long: Translation initiation factor IF-3 (202 aa).

This sequence belongs to the IF-3 family. As to quaternary structure, monomer.

The protein resides in the cytoplasm. Its function is as follows. IF-3 binds to the 30S ribosomal subunit and shifts the equilibrium between 70S ribosomes and their 50S and 30S subunits in favor of the free subunits, thus enhancing the availability of 30S subunits on which protein synthesis initiation begins. The polypeptide is Translation initiation factor IF-3 (Prochlorococcus marinus (strain MIT 9211)).